The primary structure comprises 240 residues: Uridylate kinase (240 aa).

Position 12–15 (12–15 (KLSG)) interacts with ATP. Residues 20 to 25 (GEQGNG) are involved in allosteric activation by GTP. Gly-54 contacts UMP. Positions 55 and 59 each coordinate ATP. UMP is bound by residues Asp-74 and 135-142 (TGNPYFST). ATP is bound by residues Asn-163, Tyr-169, and Asp-172.

It belongs to the UMP kinase family. As to quaternary structure, homohexamer.

Its subcellular location is the cytoplasm. It catalyses the reaction UMP + ATP = UDP + ADP. It participates in pyrimidine metabolism; CTP biosynthesis via de novo pathway; UDP from UMP (UMPK route): step 1/1. Allosterically activated by GTP. Inhibited by UTP. Catalyzes the reversible phosphorylation of UMP to UDP. This Bacillus licheniformis (strain ATCC 14580 / DSM 13 / JCM 2505 / CCUG 7422 / NBRC 12200 / NCIMB 9375 / NCTC 10341 / NRRL NRS-1264 / Gibson 46) protein is Uridylate kinase.